A 351-amino-acid chain; its full sequence is DNA integrity scanning protein DisA (351 aa).

A DAC domain is found at 4-142; sequence RSGFWQVLQQ…GPMKYILRDF (139 aa). ATP-binding positions include Gly-71, Leu-89, and 102-106; that span reads TRHRT.

It belongs to the DisA family. In terms of assembly, homooctamer. Requires Mg(2+) as cofactor.

The catalysed reaction is 2 ATP = 3',3'-c-di-AMP + 2 diphosphate. Functionally, participates in a DNA-damage check-point that is active prior to asymmetric division when DNA is damaged. DisA forms globular foci that rapidly scan along the chromosomes during sporulation, searching for lesions. When a lesion is present, DisA pauses at the lesion site. This triggers a cellular response that culminates in a temporary block in sporulation initiation. In terms of biological role, also has diadenylate cyclase activity, catalyzing the condensation of 2 ATP molecules into cyclic di-AMP (c-di-AMP). c-di-AMP acts as a signaling molecule that couples DNA integrity with progression of sporulation. The rise in c-di-AMP level generated by DisA while scanning the chromosome, operates as a positive signal that advances sporulation; upon encountering a lesion, the DisA focus arrests at the damaged site and halts c-di-AMP synthesis. This Symbiobacterium thermophilum (strain DSM 24528 / JCM 14929 / IAM 14863 / T) protein is DNA integrity scanning protein DisA.